The sequence spans 133 residues: Small ribosomal subunit protein bS6 (133 aa).

This sequence belongs to the bacterial ribosomal protein bS6 family.

Its function is as follows. Binds together with bS18 to 16S ribosomal RNA. This Chlorobium phaeovibrioides (strain DSM 265 / 1930) (Prosthecochloris vibrioformis (strain DSM 265)) protein is Small ribosomal subunit protein bS6.